A 369-amino-acid polypeptide reads, in one-letter code: tRNA/tmRNA (uracil-C(5))-methyltransferase (369 aa).

S-adenosyl-L-methionine is bound by residues Gln190, Tyr218, Asn223, Glu239, and Asp301. Residue Cys326 is the Nucleophile of the active site. The active-site Proton acceptor is Glu360.

Belongs to the class I-like SAM-binding methyltransferase superfamily. RNA M5U methyltransferase family. TrmA subfamily.

The enzyme catalyses uridine(54) in tRNA + S-adenosyl-L-methionine = 5-methyluridine(54) in tRNA + S-adenosyl-L-homocysteine + H(+). It carries out the reaction uridine(341) in tmRNA + S-adenosyl-L-methionine = 5-methyluridine(341) in tmRNA + S-adenosyl-L-homocysteine + H(+). Functionally, dual-specificity methyltransferase that catalyzes the formation of 5-methyluridine at position 54 (m5U54) in all tRNAs, and that of position 341 (m5U341) in tmRNA (transfer-mRNA). This Vibrio cholerae serotype O1 (strain ATCC 39541 / Classical Ogawa 395 / O395) protein is tRNA/tmRNA (uracil-C(5))-methyltransferase.